Reading from the N-terminus, the 475-residue chain is BTB/POZ domain-containing protein 10 (475 aa).

Residues 1–143 (MAGRPHPYDG…SSQSSSDGSC (143 aa)) are disordered. A compositionally biased stretch (basic residues) spans 22–31 (LHSRPRKLYK). Positions 57 to 80 (GHERSRDRRRSSDRSRDSSHERTE) are enriched in basic and acidic residues. Residues 81–94 (SQLTPCIRNVTSPT) are compositionally biased toward polar residues. The span at 97 to 107 (HHVEREKDHSS) shows a compositional bias: basic and acidic residues. Over residues 108–142 (SRPSSPRPQKASPNGSISSAGNSSRNSSQSSSDGS) the composition is skewed to low complexity. The interaction with AKT family members stretch occupies residues 146–475 (AGEMVFVYEN…LDPDAQNPML (330 aa)). Residues 167–241 (ERVTLIVDNT…YKTGIIRCPD (75 aa)) form the BTB domain. Residues 455–475 (LPIHPPSGNSDLDPDAQNPML) form a disordered region.

Interacts (via C-terminal 330-amino-acid region) with AKT1; AKT2 and AKT3. Interacts with PPP2CA and PPP1CA. Ubiquitously expressed. Highly expressed in adult brain, testis, aorta and small intestine and weakly expressed in the heart, lung, liver, kidney, pancreas, spleen, thymus, prostate, ovary and colon. Down-regulated in glioma.

The protein localises to the nucleus. It localises to the cytoplasm. In terms of biological role, plays a major role as an activator of AKT family members by inhibiting PPP2CA-mediated dephosphorylation, thereby keeping AKTs activated. Plays a role in preventing motor neuronal death and accelerating the growth of pancreatic beta cells. The chain is BTB/POZ domain-containing protein 10 (BTBD10) from Homo sapiens (Human).